A 262-amino-acid chain; its full sequence is Ribosomal RNA small subunit methyltransferase A (262 aa).

The S-adenosyl-L-methionine site is built by Ile-18, Gly-43, Glu-65, Asp-91, and Asn-110.

It belongs to the class I-like SAM-binding methyltransferase superfamily. rRNA adenine N(6)-methyltransferase family. RsmA subfamily.

The protein resides in the cytoplasm. The enzyme catalyses adenosine(1518)/adenosine(1519) in 16S rRNA + 4 S-adenosyl-L-methionine = N(6)-dimethyladenosine(1518)/N(6)-dimethyladenosine(1519) in 16S rRNA + 4 S-adenosyl-L-homocysteine + 4 H(+). Specifically dimethylates two adjacent adenosines (A1518 and A1519) in the loop of a conserved hairpin near the 3'-end of 16S rRNA in the 30S particle. May play a critical role in biogenesis of 30S subunits. In Ehrlichia ruminantium (strain Gardel), this protein is Ribosomal RNA small subunit methyltransferase A.